The primary structure comprises 768 residues: Cullin-3 (768 aa).

The segment at 677 to 698 (VAAKQGESDPERKETRQKVDDD) is disordered. Positions 682–698 (GESDPERKETRQKVDDD) are enriched in basic and acidic residues. A Cullin neddylation domain is found at 698–760 (DRKHEIEAAI…REYLARTPED (63 aa)). Lys-712 participates in a covalent cross-link: Glycyl lysine isopeptide (Lys-Gly) (interchain with G-Cter in NEDD8).

It belongs to the cullin family. Component of multiple BCR (BTB-CUL3-RBX1) E3 ubiquitin-protein ligase complexes formed of cul3, rbx1 and a variable BTB domain-containing protein acting as both, adapter to cullin and substrate recognition subunit. Interacts with btbd6. Post-translationally, neddylated. Attachment of NEDD8 is required for the E3 ubiquitin-protein ligase activity of the SCF-like complex.

Its subcellular location is the nucleus. It participates in protein modification; protein ubiquitination. In terms of biological role, probable core component of cullin-based SCF-like E3 ubiquitin-protein ligase complexes which mediate the ubiquitination and subsequent proteasomal degradation of target proteins. The E3 ubiquitin-protein ligase activity of the complex is dependent on the neddylation of the cullin subunit. Involved in ER-Golgi transport by regulating the size of COPII coats, thereby playing a key role in collagen export, which is required for embryonic stem (ES) cells division. May play a role in the regulation of mittotic entry via ubiquitination of aurka. This is Cullin-3 (cul3) from Xenopus tropicalis (Western clawed frog).